The primary structure comprises 546 residues: Aladin (546 aa).

Cys2 bears the N-acetylcysteine mark. Ser33 carries the phosphoserine modification. WD repeat units lie at residues Trp149 to Leu188, Arg191 to Arg230, Gly243 to Leu282, and Phe285 to Trp324. Phosphoserine is present on residues Ser495, Ser511, Ser522, Ser525, and Ser541. Residues Arg500–Leu546 form a disordered region. Residues Gln534–Leu546 show a composition bias toward low complexity. Residues Ser544 to Leu546 carry the Microbody targeting signal motif.

As to quaternary structure, interacts with NDC1, the interaction is required for nuclear pore localization. Interacts with the inactive form aurora kinase AURKA. Interacts with PGRMC2. As to expression, widely expressed. Particularly abundant in cerebellum, corpus callosum, adrenal gland, pituitary gland, gastrointestinal structures and fetal lung.

The protein localises to the nucleus. It localises to the nuclear pore complex. The protein resides in the cytoplasm. Its subcellular location is the cytoskeleton. It is found in the spindle pole. The protein localises to the nucleus envelope. Functionally, plays a role in the normal development of the peripheral and central nervous system. Required for the correct localization of aurora kinase AURKA and the microtubule minus end-binding protein NUMA1 as well as a subset of AURKA targets which ensures proper spindle formation and timely chromosome alignment. This chain is Aladin (Aaas), found in Mus musculus (Mouse).